Here is a 429-residue protein sequence, read N- to C-terminus: Bifunctional phosphoribosylaminoimidazole carboxylase/phosphoribosylaminoimidazole succinocarboxamide synthetase (429 aa).

Residues 7-264 (ASIEGYKLGK…WVAEQLADIV (258 aa)) are SAICAR synthetase. Positions 7–264 (ASIEGYKLGK…WVAEQLADIV (258 aa)) are SAICAR synthetase domain. The tract at residues 265-429 (PKKDHLVVIL…DKELRGVRNA (165 aa)) is AIR carboxylase. Residues 270–429 (LVVILMGSAS…DKELRGVRNA (160 aa)) form an AIR carboxylase domain region. CO2 is bound at residue Ser-335.

This sequence in the N-terminal section; belongs to the SAICAR synthetase family. The protein in the C-terminal section; belongs to the AIR carboxylase family. Class II subfamily. Homooctamer.

It carries out the reaction 5-amino-1-(5-phospho-D-ribosyl)imidazole-4-carboxylate + L-aspartate + ATP = (2S)-2-[5-amino-1-(5-phospho-beta-D-ribosyl)imidazole-4-carboxamido]succinate + ADP + phosphate + 2 H(+). It catalyses the reaction 5-amino-1-(5-phospho-D-ribosyl)imidazole-4-carboxylate + H(+) = 5-amino-1-(5-phospho-beta-D-ribosyl)imidazole + CO2. Its pathway is purine metabolism; IMP biosynthesis via de novo pathway; 5-amino-1-(5-phospho-D-ribosyl)imidazole-4-carboxamide from 5-amino-1-(5-phospho-D-ribosyl)imidazole-4-carboxylate: step 1/2. The protein operates within purine metabolism; IMP biosynthesis via de novo pathway; 5-amino-1-(5-phospho-D-ribosyl)imidazole-4-carboxylate from 5-amino-1-(5-phospho-D-ribosyl)imidazole (carboxylase route): step 1/1. Bifunctional phosphoribosylaminoimidazole carboxylase and phosphoribosylaminoimidazole succinocarboxamide synthetase catalyzing two reactions of the de novo purine biosynthetic pathway. The protein is Bifunctional phosphoribosylaminoimidazole carboxylase/phosphoribosylaminoimidazole succinocarboxamide synthetase of Drosophila melanogaster (Fruit fly).